Consider the following 121-residue polypeptide: MVEKTKGRKEEVVTREYTINLHKRLHGCTFKKKAPNAIKEIRKFAQKAMGTKDVRVDVKLNKQIWSRGIRSVPRRVRVRIARKRNDDEDAKEELYSLVTVAKIPAGTLKGLGPQIIEEDDE.

This sequence belongs to the eukaryotic ribosomal protein eL31 family.

This chain is Large ribosomal subunit protein eL31 (RPL31), found in Panax ginseng (Korean ginseng).